The following is a 458-amino-acid chain: Nuclear transcription factor Y subunit gamma (458 aa).

Residues glutamine 305–glutamine 315 are compositionally biased toward low complexity. The disordered stretch occupies residues glutamine 305–serine 379. Over residues threonine 339 to threonine 351 the composition is skewed to polar residues.

Belongs to the NFYC/HAP5 subunit family. Heterotrimeric transcription factor composed of three components, NF-YA, NF-YB and NF-YC. NF-YB and NF-YC must interact and dimerize for NF-YA association and DNA binding.

It localises to the nucleus. In terms of biological role, component of the sequence-specific heterotrimeric transcription factor (NF-Y) which specifically recognizes a 5'-CCAAT-3' box motif found in the promoters of its target genes. NF-Y can function as both an activator and a repressor, depending on its interacting cofactors. The polypeptide is Nuclear transcription factor Y subunit gamma (NFYC) (Homo sapiens (Human)).